A 180-amino-acid chain; its full sequence is ATP synthase subunit delta (180 aa).

The protein belongs to the ATPase delta chain family. In terms of assembly, F-type ATPases have 2 components, F(1) - the catalytic core - and F(0) - the membrane proton channel. F(1) has five subunits: alpha(3), beta(3), gamma(1), delta(1), epsilon(1). F(0) has three main subunits: a(1), b(2) and c(10-14). The alpha and beta chains form an alternating ring which encloses part of the gamma chain. F(1) is attached to F(0) by a central stalk formed by the gamma and epsilon chains, while a peripheral stalk is formed by the delta and b chains.

The protein localises to the cell inner membrane. Its function is as follows. F(1)F(0) ATP synthase produces ATP from ADP in the presence of a proton or sodium gradient. F-type ATPases consist of two structural domains, F(1) containing the extramembraneous catalytic core and F(0) containing the membrane proton channel, linked together by a central stalk and a peripheral stalk. During catalysis, ATP synthesis in the catalytic domain of F(1) is coupled via a rotary mechanism of the central stalk subunits to proton translocation. This protein is part of the stalk that links CF(0) to CF(1). It either transmits conformational changes from CF(0) to CF(1) or is implicated in proton conduction. The chain is ATP synthase subunit delta from Geobacter metallireducens (strain ATCC 53774 / DSM 7210 / GS-15).